The primary structure comprises 374 residues: tRNA (guanine(26)-N(2))-dimethyltransferase (374 aa).

In terms of domain architecture, Trm1 methyltransferase spans 4–368 (IEATEGTTTF…APLPVLYDAI (365 aa)). S-adenosyl-L-methionine-binding residues include Arg-41, Arg-66, Asp-82, Asp-108, and Ala-109. Cys-237, Cys-240, Cys-256, and Cys-259 together coordinate Zn(2+).

This sequence belongs to the class I-like SAM-binding methyltransferase superfamily. Trm1 family.

The catalysed reaction is guanosine(26) in tRNA + 2 S-adenosyl-L-methionine = N(2)-dimethylguanosine(26) in tRNA + 2 S-adenosyl-L-homocysteine + 2 H(+). Dimethylates a single guanine residue at position 26 of a number of tRNAs using S-adenosyl-L-methionine as donor of the methyl groups. This Methanoregula boonei (strain DSM 21154 / JCM 14090 / 6A8) protein is tRNA (guanine(26)-N(2))-dimethyltransferase.